Reading from the N-terminus, the 694-residue chain is Acetyl-coenzyme A synthetase (694 aa).

The segment at 1-23 (MSDKRPRSPCSNNNDELNDSSVL) is disordered. Residues 9–23 (PCSNNNDELNDSSVL) show a composition bias toward polar residues. CoA contacts are provided by residues 229–232 (RGKK) and Thr-347. ATP contacts are provided by residues 423 to 425 (GEP), 447 to 452 (DTYWQT), Asp-536, and Arg-551. Ser-559 provides a ligand contact to CoA. Arg-562 provides a ligand contact to ATP. Residue Arg-628 participates in CoA binding.

Belongs to the ATP-dependent AMP-binding enzyme family.

It catalyses the reaction acetate + ATP + CoA = acetyl-CoA + AMP + diphosphate. The polypeptide is Acetyl-coenzyme A synthetase (ACS) (Cryptosporidium parvum).